The chain runs to 1012 residues: Vacuolar membrane protease (1012 aa).

Over 1 to 60 (MRRSTDPRNLLVRRGPLLVDGESAISELDPGFFPTGDAPKMSSTTRRRFNLIAFTPGPVT) the chain is Cytoplasmic. A helical transmembrane segment spans residues 61–81 (VISSLVYLALLIPLLLVHTIV). At 82-432 (PSAPKSNPKG…SFAVFRLHTL (351 aa)) the chain is on the vacuolar side. Asn-159 carries N-linked (GlcNAc...) asparagine glycosylation. Residues His-215 and Asp-227 each coordinate Zn(2+). Residue Glu-261 is the Proton acceptor of the active site. Positions 262, 287, and 360 each coordinate Zn(2+). A helical membrane pass occupies residues 433–453 (FAISVTLLVVCPIVLFVIGII). At 454-487 (LSKMDKMYLFSIHETIPETKEKVSVRGLRGLFRY) the chain is on the cytoplasmic side. Residues 488-508 (PIILVVSSGILIGLSYLLAKV) form a helical membrane-spanning segment. At 509-518 (NPFIVHSSSY) the chain is on the vacuolar side. Residues 519-539 (AVWSMMLSSWIFMTWFLSCIA) form a helical membrane-spanning segment. The Cytoplasmic segment spans residues 540–550 (DFFRPSALHRA). The chain crosses the membrane as a helical span at residues 551-571 (YTFTWQLLVMWVLLVISTVYV). Residues 572–575 (NQHD) are Vacuolar-facing. A helical membrane pass occupies residues 576 to 596 (IAAGYFIVFYFAGTFLATLIS). Over 597–710 (YLELFALPNK…WSASLPTWTW (114 aa)) the chain is Cytoplasmic. Residues 614–629 (SQYPSRLGSNRSSRIL) are compositionally biased toward polar residues. Positions 614 to 660 (SQYPSRLGSNRSSRILSPSADELPTGGDNNGEIYDGEEEPTESSSLL) are disordered. Residues 711-731 (VLQFLFVGPVVIMFIGQLGLF) traverse the membrane as a helical segment. Residues 732 to 743 (LTSAMNQVGADG) lie on the Vacuolar side of the membrane. The helical transmembrane segment at 744 to 764 (VGLLVVYIAIAVFSVLLLIPL) threads the bilayer. At 765–777 (SPFIHRFTYHVPT) the chain is on the cytoplasmic side. A helical membrane pass occupies residues 778–798 (FLLLVFIATLIYNLAAFPFSA). The Vacuolar portion of the chain corresponds to 799-1012 (ENRLKIFFVQ…DGLVEVSRGF (214 aa)). N-linked (GlcNAc...) asparagine glycosylation is found at Asn-842 and Asn-878.

It belongs to the peptidase M28 family. Zn(2+) serves as cofactor.

It is found in the vacuole membrane. Functionally, may be involved in vacuolar sorting and osmoregulation. The polypeptide is Vacuolar membrane protease (Coccidioides posadasii (strain RMSCC 757 / Silveira) (Valley fever fungus)).